The chain runs to 357 residues: Protein RecA (357 aa).

67–74 contributes to the ATP binding site; it reads GPESSGKT.

Belongs to the RecA family.

The protein resides in the cytoplasm. In terms of biological role, can catalyze the hydrolysis of ATP in the presence of single-stranded DNA, the ATP-dependent uptake of single-stranded DNA by duplex DNA, and the ATP-dependent hybridization of homologous single-stranded DNAs. It interacts with LexA causing its activation and leading to its autocatalytic cleavage. This Leifsonia xyli subsp. xyli (strain CTCB07) protein is Protein RecA.